Here is a 133-residue protein sequence, read N- to C-terminus: Putative pre-16S rRNA nuclease (133 aa).

This sequence belongs to the YqgF nuclease family.

It localises to the cytoplasm. Could be a nuclease involved in processing of the 5'-end of pre-16S rRNA. The protein is Putative pre-16S rRNA nuclease of Bordetella bronchiseptica (strain ATCC BAA-588 / NCTC 13252 / RB50) (Alcaligenes bronchisepticus).